The chain runs to 282 residues: Centromere protein P (282 aa).

A coiled-coil region spans residues 1–80 (MEQKYEEDIQ…KDLRRQTEIN (80 aa)).

Belongs to the CENP-P/CTF19 family.

The protein localises to the nucleus. It localises to the chromosome. The protein resides in the centromere. Probable component of a centromeric complex involved in assembly of kinetochore proteins, mitotic progression and chromosome segregation. This chain is Centromere protein P (cenpp), found in Danio rerio (Zebrafish).